A 444-amino-acid polypeptide reads, in one-letter code: Sprouty-related, EVH1 domain-containing protein 1 (444 aa).

Serine 2 carries the post-translational modification N-acetylserine. Residues 6–123 (ATSDNDNSYA…RGIRRAIEDI (118 aa)) form the WH1 domain. Lysine 225 bears the N6-methyllysine mark. Residues 234–286 (SIRHVSFQDEDEIVRINPRDILIRRYADYRHPDMWKNDLERDDTDSSVPFSKQ) enclose the KBD domain. The residue at position 239 (serine 239) is a Phosphoserine. A disordered region spans residues 268–287 (WKNDLERDDTDSSVPFSKQD). Serine 309 is subject to Phosphoserine. The tract at residues 333-444 (SRCVYCQERF…CCGGKHKAAG (112 aa)) is required for interaction with TESK1. Residues 334 to 442 (RCVYCQERFN…CGCCGGKHKA (109 aa)) enclose the SPR domain.

In terms of assembly, homodimer and heterodimer. Able to interact with SPRED2 to form heterodimers. Interacts (via C-terminus) with TAOK1/MARKK (via C-terminus); the interaction does not affect TAOK1 kinase activity. Interacts (via C-terminus) with TESK1 (via C-terminus); the interaction inhibits TESK1 kinase activity. Interacts with CAV1. Interacts with RAS. Interacts with palmitoyltransferase ZDHHC17/HIP14; the interaction leads to palmitoylation of SPRED1. Palmitoylated by ZDHHC17/HIP14. Post-translationally, ubiquitinated. In terms of processing, phosphorylated on tyrosine. As to expression, expressed in brain. Weakly expressed in lung, heart, liver, kidney, intestine, spleen, testis, thymus, colon and ovary. Also expressed in embryonic tissues such as heart, lung, liver and brain. Highly expressed in IL3-dependent hematopoietic cell lines (Ba/F3 and MC/9) and bone marrow-derived mast cells (BMMC).

The protein resides in the cell membrane. Its subcellular location is the membrane. It localises to the caveola. It is found in the nucleus. Functionally, tyrosine kinase substrate that inhibits growth-factor-mediated activation of MAP kinase. Negatively regulates hematopoiesis of bone marrow. Inhibits fibroblast growth factor (FGF)-induced retinal lens fiber differentiation, probably by inhibiting FGF-mediated phosphorylation of ERK1/2. Attenuates actin stress fiber formation via inhibition of TESK1-mediated phosphorylation of cofilin. Inhibits TGFB-induced epithelial-to-mesenchymal transition in lens epithelial cells. The protein is Sprouty-related, EVH1 domain-containing protein 1 (Spred1) of Mus musculus (Mouse).